The chain runs to 371 residues: Probable dual-specificity RNA methyltransferase RlmN (371 aa).

E113 functions as the Proton acceptor in the catalytic mechanism. The 234-residue stretch at 119-352 folds into the Radical SAM core domain; it reads QSWGNSVCVT…TTVRREMGGE (234 aa). C126 and C357 form a disulfide bridge. [4Fe-4S] cluster contacts are provided by C133, C137, and C140. S-adenosyl-L-methionine is bound by residues 182–183, S214, 237–239, and N313; these read GE and SLH. C357 acts as the S-methylcysteine intermediate in catalysis.

It belongs to the radical SAM superfamily. RlmN family. [4Fe-4S] cluster serves as cofactor.

It is found in the cytoplasm. It catalyses the reaction adenosine(2503) in 23S rRNA + 2 reduced [2Fe-2S]-[ferredoxin] + 2 S-adenosyl-L-methionine = 2-methyladenosine(2503) in 23S rRNA + 5'-deoxyadenosine + L-methionine + 2 oxidized [2Fe-2S]-[ferredoxin] + S-adenosyl-L-homocysteine. The enzyme catalyses adenosine(37) in tRNA + 2 reduced [2Fe-2S]-[ferredoxin] + 2 S-adenosyl-L-methionine = 2-methyladenosine(37) in tRNA + 5'-deoxyadenosine + L-methionine + 2 oxidized [2Fe-2S]-[ferredoxin] + S-adenosyl-L-homocysteine. Functionally, specifically methylates position 2 of adenine 2503 in 23S rRNA and position 2 of adenine 37 in tRNAs. The chain is Probable dual-specificity RNA methyltransferase RlmN from Symbiobacterium thermophilum (strain DSM 24528 / JCM 14929 / IAM 14863 / T).